We begin with the raw amino-acid sequence, 496 residues long: Lysine--tRNA ligase (496 aa).

Glutamate 409 and glutamate 416 together coordinate Mg(2+).

It belongs to the class-II aminoacyl-tRNA synthetase family. As to quaternary structure, homodimer. The cofactor is Mg(2+).

It is found in the cytoplasm. The catalysed reaction is tRNA(Lys) + L-lysine + ATP = L-lysyl-tRNA(Lys) + AMP + diphosphate. This Streptococcus pneumoniae (strain CGSP14) protein is Lysine--tRNA ligase.